The chain runs to 290 residues: ATP synthase gamma chain (290 aa).

The protein belongs to the ATPase gamma chain family. As to quaternary structure, F-type ATPases have 2 components, CF(1) - the catalytic core - and CF(0) - the membrane proton channel. CF(1) has five subunits: alpha(3), beta(3), gamma(1), delta(1), epsilon(1). CF(0) has three main subunits: a, b and c.

The protein localises to the cell inner membrane. Its function is as follows. Produces ATP from ADP in the presence of a proton gradient across the membrane. The gamma chain is believed to be important in regulating ATPase activity and the flow of protons through the CF(0) complex. This is ATP synthase gamma chain from Anaeromyxobacter sp. (strain K).